The following is a 377-amino-acid chain: 5-hydroxytryptamine receptor 1D (377 aa).

3 N-linked (GlcNAc...) asparagine glycosylation sites follow: Asn5, Asn17, and Asn21. Transmembrane regions (helical) follow at residues 39–64 (ISLA…TTIF), 76–97 (LIGS…ISIA), and 110–134 (LCDI…VIAL). An intrachain disulfide couples Cys111 to Cys188. Positions 118 and 122 each coordinate serotonin. A DRY motif; important for ligand-induced conformation changes motif is present at residues 135–137 (DRY). A run of 4 helical transmembrane segments spans residues 155 to 176 (AAVM…PLFW), 195 to 218 (ISYT…ILYG), 301 to 326 (KTLG…VLPI), and 336 to 359 (ALFD…YTVF). Ser321 serves as a coordination point for serotonin. The NPxxY motif; important for ligand-induced conformation changes and signaling signature appears at 352–356 (NPIIY).

Belongs to the G-protein coupled receptor 1 family. As to quaternary structure, homodimer. Heterodimer with HTR1B.

It is found in the cell membrane. In terms of biological role, G-protein coupled receptor for 5-hydroxytryptamine (serotonin). Also functions as a receptor for ergot alkaloid derivatives, various anxiolytic and antidepressant drugs and other psychoactive substances. Ligand binding causes a conformation change that triggers signaling via guanine nucleotide-binding proteins (G proteins) and modulates the activity of downstream effectors, such as adenylate cyclase. HTR1D is coupled to G(i)/G(o) G alpha proteins and mediates inhibitory neurotransmission by inhibiting adenylate cyclase activity. Regulates the release of 5-hydroxytryptamine in the brain, and thereby affects neural activity. May also play a role in regulating the release of other neurotransmitters. May play a role in vasoconstriction. The protein is 5-hydroxytryptamine receptor 1D (HTR1D) of Canis lupus familiaris (Dog).